The primary structure comprises 179 residues: Large ribosomal subunit protein uL5 (179 aa).

Belongs to the universal ribosomal protein uL5 family. As to quaternary structure, part of the 50S ribosomal subunit; part of the 5S rRNA/L5/L18/L25 subcomplex. Contacts the 5S rRNA and the P site tRNA. Forms a bridge to the 30S subunit in the 70S ribosome.

Its function is as follows. This is one of the proteins that bind and probably mediate the attachment of the 5S RNA into the large ribosomal subunit, where it forms part of the central protuberance. In the 70S ribosome it contacts protein S13 of the 30S subunit (bridge B1b), connecting the 2 subunits; this bridge is implicated in subunit movement. Contacts the P site tRNA; the 5S rRNA and some of its associated proteins might help stabilize positioning of ribosome-bound tRNAs. This is Large ribosomal subunit protein uL5 from Rickettsia africae (strain ESF-5).